Here is a 693-residue protein sequence, read N- to C-terminus: A disintegrin and metalloproteinase with thrombospondin motifs like (693 aa).

A signal peptide spans 1-24 (MESSVATHWLSAFVILCSFITTQS). Polar residues predominate over residues 67-80 (IPTSHPANSNSADS). Residues 67–91 (IPTSHPANSNSADSGKTPHLKTEKV) are disordered. Asparagine 124 and asparagine 194 each carry an N-linked (GlcNAc...) asparagine glycan. One can recognise a Peptidase M12B domain in the interval 353-585 (IYPEILVIVD…DTATCLYNSP (233 aa)). Disulfide bonds link cysteine 485–cysteine 580 and cysteine 541–cysteine 564. Histidine 514 contacts Zn(2+). The Metal-binding motif lies at 514–525 (HEVGHLLGAVHD). The active site involves glutamate 515. Residues histidine 518 and histidine 524 each coordinate Zn(2+). A glycan (N-linked (GlcNAc...) asparagine) is linked at asparagine 687.

The cofactor is Zn(2+).

It localises to the secreted. The protein resides in the extracellular space. The protein localises to the extracellular matrix. Involved in larval molting and metamorphosis. May degrade extracellular matrix (ECM) and basement membrane (BM) during the development of organs to allow degeneration and remodeling of tissues. The chain is A disintegrin and metalloproteinase with thrombospondin motifs like from Bombyx mori (Silk moth).